The sequence spans 342 residues: uncharacterized protein (342 aa).

It belongs to the cycloisomerase 2 family.

This is an uncharacterized protein from Staphylococcus epidermidis (strain ATCC 12228 / FDA PCI 1200).